The following is a 336-amino-acid chain: Adenosine deaminase (336 aa).

Residues histidine 15 and histidine 17 each contribute to the Zn(2+) site. Substrate-binding residues include histidine 17, aspartate 19, and glycine 172. Residue histidine 199 coordinates Zn(2+). Glutamate 202 acts as the Proton donor in catalysis. Aspartate 279 is a binding site for Zn(2+).

The protein belongs to the metallo-dependent hydrolases superfamily. Adenosine and AMP deaminases family. Adenosine deaminase subfamily. The cofactor is Zn(2+).

It carries out the reaction adenosine + H2O + H(+) = inosine + NH4(+). The catalysed reaction is 2'-deoxyadenosine + H2O + H(+) = 2'-deoxyinosine + NH4(+). Its function is as follows. Catalyzes the hydrolytic deamination of adenosine and 2-deoxyadenosine. This is Adenosine deaminase from Streptococcus thermophilus (strain ATCC BAA-250 / LMG 18311).